The primary structure comprises 74 residues: UPF0435 protein ABC2298 (74 aa).

Belongs to the UPF0435 family.

The protein is UPF0435 protein ABC2298 of Shouchella clausii (strain KSM-K16) (Alkalihalobacillus clausii).